The primary structure comprises 70 residues: Myotoxin (70 aa).

A signal peptide spans 1 to 22; sequence MKILYLLFAFLFLAFLSEPGNA. Cystine bridges form between Cys-26/Cys-58, Cys-33/Cys-52, and Cys-40/Cys-59.

Belongs to the crotamine-myotoxin family. In terms of assembly, monomer. In terms of tissue distribution, expressed by the venom gland.

It localises to the secreted. In terms of biological role, cationic peptide that possesses multiple functions. It acts as a cell-penetrating peptide (CPP), and as a potent voltage-gated potassium channel (Kv) inhibitor. It exhibits antimicrobial activities, hind limb paralysis, and severe muscle necrosis by a non-enzymatic mechanism. The polypeptide is Myotoxin (Crotalus helleri (Southern pacific rattlesnake)).